A 914-amino-acid chain; its full sequence is Isoleucine--tRNA ligase (914 aa).

The short motif at 64–74 (PYANGNFHLGH) is the 'HIGH' region element. Glu557 contacts L-isoleucyl-5'-AMP. Residues 598–602 (PMSKS) carry the 'KMSKS' region motif. ATP is bound at residue Lys601. Positions 889, 892, 906, and 909 each coordinate Zn(2+).

Belongs to the class-I aminoacyl-tRNA synthetase family. IleS type 1 subfamily. In terms of assembly, monomer. It depends on Zn(2+) as a cofactor.

Its subcellular location is the cytoplasm. The enzyme catalyses tRNA(Ile) + L-isoleucine + ATP = L-isoleucyl-tRNA(Ile) + AMP + diphosphate. Catalyzes the attachment of isoleucine to tRNA(Ile). As IleRS can inadvertently accommodate and process structurally similar amino acids such as valine, to avoid such errors it has two additional distinct tRNA(Ile)-dependent editing activities. One activity is designated as 'pretransfer' editing and involves the hydrolysis of activated Val-AMP. The other activity is designated 'posttransfer' editing and involves deacylation of mischarged Val-tRNA(Ile). This Leptospira interrogans serogroup Icterohaemorrhagiae serovar Lai (strain 56601) protein is Isoleucine--tRNA ligase.